Here is a 248-residue protein sequence, read N- to C-terminus: PF03932 family protein CutC (248 aa).

This sequence belongs to the CutC family.

It is found in the cytoplasm. This Citrobacter koseri (strain ATCC BAA-895 / CDC 4225-83 / SGSC4696) protein is PF03932 family protein CutC.